A 200-amino-acid chain; its full sequence is Peptidyl-tRNA hydrolase (200 aa).

Position 15 (tyrosine 15) interacts with tRNA. The active-site Proton acceptor is the histidine 20. Tyrosine 66, asparagine 68, and asparagine 114 together coordinate tRNA.

It belongs to the PTH family. Monomer.

The protein resides in the cytoplasm. The catalysed reaction is an N-acyl-L-alpha-aminoacyl-tRNA + H2O = an N-acyl-L-amino acid + a tRNA + H(+). Hydrolyzes ribosome-free peptidyl-tRNAs (with 1 or more amino acids incorporated), which drop off the ribosome during protein synthesis, or as a result of ribosome stalling. In terms of biological role, catalyzes the release of premature peptidyl moieties from peptidyl-tRNA molecules trapped in stalled 50S ribosomal subunits, and thus maintains levels of free tRNAs and 50S ribosomes. This is Peptidyl-tRNA hydrolase from Paraburkholderia phytofirmans (strain DSM 17436 / LMG 22146 / PsJN) (Burkholderia phytofirmans).